We begin with the raw amino-acid sequence, 330 residues long: MGPLWLDVAGYELSAEDREILQHPTVGGVILFGRNYHDNQQLLALNKAIRQAAKRPILIGVDQEGGRVQRFREGFSRIPPAQYYARAENGVELAEQGGWLMAAELIAHDVDLSFAPVLDMGFACKAIGNRAFGEDVQTVLKHSSAFLRGMKAVGMATTGKHFPGHGAVIADSHLETPYDERETIAQDMAIFRAQIEAGVLDAMMPAHVVYPHYDAQPASGSSYWLKQVLREELGFKGIVFSDDLSMEGAAVMGGPVERSHQALVAGCDMILICNKREAAVEVLDNLPIMEVPQAEALLKKQQFSYSELKRLERWQQASANMQRLIEQFSE.

Residues D62, R70, R130, and 160–161 contribute to the substrate site; that span reads KH. Catalysis depends on H173, which acts as the Proton donor/acceptor. D242 (nucleophile) is an active-site residue.

Belongs to the glycosyl hydrolase 3 family. NagZ subfamily. In terms of assembly, monomer.

It localises to the cytoplasm. It catalyses the reaction Hydrolysis of terminal non-reducing N-acetyl-D-hexosamine residues in N-acetyl-beta-D-hexosaminides.. Its pathway is cell wall biogenesis; peptidoglycan recycling. Its function is as follows. Plays a role in peptidoglycan recycling by cleaving the terminal beta-1,4-linked N-acetylglucosamine (GlcNAc) from peptide-linked peptidoglycan fragments, giving rise to free GlcNAc, anhydro-N-acetylmuramic acid and anhydro-N-acetylmuramic acid-linked peptides. Plays a role in beta-lactam antibiotic resistance via its role in generating anhydro-N-acetylmuramic acid-linked peptides; these peptides function as signaling molecules that induce high-level expression of the beta-lactamase AmpC. The chain is Beta-hexosaminidase from Vibrio cholerae serotype O1 (strain ATCC 39315 / El Tor Inaba N16961).